Consider the following 501-residue polypeptide: WD repeat-containing protein wdr-5.3 (501 aa).

Disordered regions lie at residues 1-35 (MNPE…LESN), 58-85 (PIGV…YQSH), and 155-197 (KSAE…ITKK). Residues 22-35 (PNQQSLQSRMLESN) show a composition bias toward polar residues. Residues 167–177 (SITTKPTSTIQ) are compositionally biased toward polar residues. 7 WD repeats span residues 211 to 241 (GHTK…KVWN), 253 to 283 (SHQL…KIFD), 295 to 325 (GHTN…RVWD), 337 to 367 (AHSD…RVWD), 381 to 410 (DHAP…KLWD), 422 to 455 (GHKN…LVWS), and 467 to 499 (GHTT…RIWR).

The protein belongs to the WD repeat WDR5/wds family.

Not required for methylation of histone H3 'Lys-4'. This chain is WD repeat-containing protein wdr-5.3 (wdr-5.3), found in Caenorhabditis elegans.